We begin with the raw amino-acid sequence, 311 residues long: 4-hydroxy-3-methylbut-2-enyl diphosphate reductase (311 aa).

Cysteine 12 serves as a coordination point for [4Fe-4S] cluster. Positions 41 and 74 each coordinate (2E)-4-hydroxy-3-methylbut-2-enyl diphosphate. Residues histidine 41 and histidine 74 each coordinate dimethylallyl diphosphate. The isopentenyl diphosphate site is built by histidine 41 and histidine 74. [4Fe-4S] cluster is bound at residue cysteine 96. Residue histidine 124 coordinates (2E)-4-hydroxy-3-methylbut-2-enyl diphosphate. Residue histidine 124 participates in dimethylallyl diphosphate binding. An isopentenyl diphosphate-binding site is contributed by histidine 124. Glutamate 126 functions as the Proton donor in the catalytic mechanism. Threonine 167 lines the (2E)-4-hydroxy-3-methylbut-2-enyl diphosphate pocket. Cysteine 197 lines the [4Fe-4S] cluster pocket. Serine 225, serine 226, asparagine 227, and serine 269 together coordinate (2E)-4-hydroxy-3-methylbut-2-enyl diphosphate. Dimethylallyl diphosphate contacts are provided by serine 225, serine 226, asparagine 227, and serine 269. 4 residues coordinate isopentenyl diphosphate: serine 225, serine 226, asparagine 227, and serine 269.

This sequence belongs to the IspH family. [4Fe-4S] cluster is required as a cofactor.

It carries out the reaction isopentenyl diphosphate + 2 oxidized [2Fe-2S]-[ferredoxin] + H2O = (2E)-4-hydroxy-3-methylbut-2-enyl diphosphate + 2 reduced [2Fe-2S]-[ferredoxin] + 2 H(+). The enzyme catalyses dimethylallyl diphosphate + 2 oxidized [2Fe-2S]-[ferredoxin] + H2O = (2E)-4-hydroxy-3-methylbut-2-enyl diphosphate + 2 reduced [2Fe-2S]-[ferredoxin] + 2 H(+). The protein operates within isoprenoid biosynthesis; dimethylallyl diphosphate biosynthesis; dimethylallyl diphosphate from (2E)-4-hydroxy-3-methylbutenyl diphosphate: step 1/1. It functions in the pathway isoprenoid biosynthesis; isopentenyl diphosphate biosynthesis via DXP pathway; isopentenyl diphosphate from 1-deoxy-D-xylulose 5-phosphate: step 6/6. In terms of biological role, catalyzes the conversion of 1-hydroxy-2-methyl-2-(E)-butenyl 4-diphosphate (HMBPP) into a mixture of isopentenyl diphosphate (IPP) and dimethylallyl diphosphate (DMAPP). Acts in the terminal step of the DOXP/MEP pathway for isoprenoid precursor biosynthesis. This is 4-hydroxy-3-methylbut-2-enyl diphosphate reductase from Aeromonas hydrophila subsp. hydrophila (strain ATCC 7966 / DSM 30187 / BCRC 13018 / CCUG 14551 / JCM 1027 / KCTC 2358 / NCIMB 9240 / NCTC 8049).